A 209-amino-acid polypeptide reads, in one-letter code: Uracil phosphoribosyltransferase (209 aa).

5-phospho-alpha-D-ribose 1-diphosphate-binding positions include Arg79, Arg104, and 131-139 (DPMLATGGS). Uracil-binding positions include Ile194 and 199–201 (GDA). A 5-phospho-alpha-D-ribose 1-diphosphate-binding site is contributed by Asp200.

The protein belongs to the UPRTase family. Mg(2+) is required as a cofactor.

The enzyme catalyses UMP + diphosphate = 5-phospho-alpha-D-ribose 1-diphosphate + uracil. The protein operates within pyrimidine metabolism; UMP biosynthesis via salvage pathway; UMP from uracil: step 1/1. Its activity is regulated as follows. Allosterically activated by GTP. Functionally, catalyzes the conversion of uracil and 5-phospho-alpha-D-ribose 1-diphosphate (PRPP) to UMP and diphosphate. The polypeptide is Uracil phosphoribosyltransferase (Streptococcus suis (strain 05ZYH33)).